We begin with the raw amino-acid sequence, 175 residues long: Bifunctional protein PyrR (175 aa).

Residues 40 to 41 (TR), Arg85, 102 to 110 (DDVLYTGRT), Arg135, and Val159 contribute to the substrate site. The PRPP-binding signature appears at 98 to 110 (VVIIDDVLYTGRT).

This sequence belongs to the purine/pyrimidine phosphoribosyltransferase family. PyrR subfamily. Homodimer and homohexamer; in equilibrium.

The catalysed reaction is UMP + diphosphate = 5-phospho-alpha-D-ribose 1-diphosphate + uracil. Its function is as follows. Regulates transcriptional attenuation of the pyrimidine nucleotide (pyr) operon by binding in a uridine-dependent manner to specific sites on pyr mRNA. This disrupts an antiterminator hairpin in the RNA and favors formation of a downstream transcription terminator, leading to a reduced expression of downstream genes. In terms of biological role, also displays a weak uracil phosphoribosyltransferase activity which is not physiologically significant. This is Bifunctional protein PyrR from Staphylococcus epidermidis (strain ATCC 35984 / DSM 28319 / BCRC 17069 / CCUG 31568 / BM 3577 / RP62A).